A 563-amino-acid polypeptide reads, in one-letter code: Lipase 1 (563 aa).

Positions 1–19 (MVSKTFFLAAALNVVGTLA) are cleaved as a signal peptide. Q20 carries the pyrrolidone carboxylic acid modification. A disulfide bridge links C80 with C124. The active-site Acyl-ester intermediate is S236. An intrachain disulfide couples C295 to C307. N302 is a glycosylation site (N-linked (GlcNAc...) asparagine). Residue E373 is the Charge relay system of the active site. The N-linked (GlcNAc...) asparagine glycan is linked to N383. H482 functions as the Charge relay system in the catalytic mechanism.

This sequence belongs to the type-B carboxylesterase/lipase family. As to quaternary structure, monomer.

It is found in the secreted. The catalysed reaction is a triacylglycerol + H2O = a diacylglycerol + a fatty acid + H(+). Its function is as follows. Hydrolyzes all ester bonds in triglyceride and displays a high affinity for triolein. For unsaturated substrates having long fatty acyl chains (C18:2 cis-9, cis-12 and C18:3 cis-9, cis-12, cis-15) GCL I shows higher specific activity than GCL II, whereas GCL II shows higher specific activity against saturated substrates having short fatty acid chains (C8, C10, C12 and C14). This Geotrichum candidum (Oospora lactis) protein is Lipase 1 (LIP1).